Reading from the N-terminus, the 293-residue chain is Probable 2-(5''-triphosphoribosyl)-3'-dephosphocoenzyme-A synthase (293 aa).

The protein belongs to the CitG/MdcB family.

It catalyses the reaction 3'-dephospho-CoA + ATP = 2'-(5''-triphospho-alpha-D-ribosyl)-3'-dephospho-CoA + adenine. Its function is as follows. Involved in the formation of 2-(5''-phosphoribosyl)-3'-dephosphocoenzyme-A, the prosthetic group of the acyl-carrier protein of the malonate decarboxylase. In Pseudomonas paraeruginosa (strain DSM 24068 / PA7) (Pseudomonas aeruginosa (strain PA7)), this protein is Probable 2-(5''-triphosphoribosyl)-3'-dephosphocoenzyme-A synthase.